The chain runs to 360 residues: NAD(P)H-quinone oxidoreductase subunit 1, chloroplastic (360 aa).

8 helical membrane-spanning segments follow: residues 30–50, 98–118, 127–147, 165–185, 203–223, 248–268, 297–317, and 340–360; these read FLPIFSLVLGILTGVLVLVWL, FSIGPSIAVISILLSYSVIPF, FNIGIFLWIAISSIAPIGLLM, AAQSISYEIPLTLCLLSISLL, FWGWNLWRQPIGFIIFLISSL, YSGIKFGLFYVASYLNLLISS, IFGTTIGIFITLAKTYLFLFI, and FLLPISLGNLLLTTSFQVFSL.

The protein belongs to the complex I subunit 1 family. In terms of assembly, NDH is composed of at least 16 different subunits, 5 of which are encoded in the nucleus.

Its subcellular location is the plastid. It localises to the chloroplast thylakoid membrane. The enzyme catalyses a plastoquinone + NADH + (n+1) H(+)(in) = a plastoquinol + NAD(+) + n H(+)(out). It carries out the reaction a plastoquinone + NADPH + (n+1) H(+)(in) = a plastoquinol + NADP(+) + n H(+)(out). NDH shuttles electrons from NAD(P)H:plastoquinone, via FMN and iron-sulfur (Fe-S) centers, to quinones in the photosynthetic chain and possibly in a chloroplast respiratory chain. The immediate electron acceptor for the enzyme in this species is believed to be plastoquinone. Couples the redox reaction to proton translocation, and thus conserves the redox energy in a proton gradient. This is NAD(P)H-quinone oxidoreductase subunit 1, chloroplastic from Aethionema grandiflorum (Persian stone-cress).